A 119-amino-acid chain; its full sequence is uncharacterized protein (119 aa).

4 helical membrane-spanning segments follow: residues 3 to 23 (WVFL…MKLS), 29 to 49 (LIPS…LTLT), 58 to 78 (AYAV…FLFF), and 87 to 107 (VISI…EHVA).

This sequence belongs to the drug/metabolite transporter (DMT) superfamily. Small multidrug resistance (SMR) (TC 2.A.7.1) family.

It localises to the cell membrane. This is an uncharacterized protein from Bacillus subtilis (strain 168).